A 210-amino-acid chain; its full sequence is Putative polysaccharide-binding protein (210 aa).

Residues 1–22 (MGFLKGTAAALTLLSAAAAASA) form the signal peptide. CBM1 domains are found at residues 23-62 (CGVL…AMPG), 63-105 (MMGQ…LANK), 125-165 (CGKE…APPP), and 166-210 (KMGE…PMHP).

This is Putative polysaccharide-binding protein from Porphyra purpurea (Red seaweed).